Reading from the N-terminus, the 416-residue chain is Serine hydroxymethyltransferase (416 aa).

Residues Leu-118 and 122–124 contribute to the (6S)-5,6,7,8-tetrahydrofolate site; that span reads GHL. At Lys-226 the chain carries N6-(pyridoxal phosphate)lysine. (6S)-5,6,7,8-tetrahydrofolate-binding positions include Glu-242 and 350 to 352; that span reads SPF.

This sequence belongs to the SHMT family. In terms of assembly, homodimer. Pyridoxal 5'-phosphate is required as a cofactor.

The protein resides in the cytoplasm. The enzyme catalyses (6R)-5,10-methylene-5,6,7,8-tetrahydrofolate + glycine + H2O = (6S)-5,6,7,8-tetrahydrofolate + L-serine. It participates in one-carbon metabolism; tetrahydrofolate interconversion. The protein operates within amino-acid biosynthesis; glycine biosynthesis; glycine from L-serine: step 1/1. Functionally, catalyzes the reversible interconversion of serine and glycine with tetrahydrofolate (THF) serving as the one-carbon carrier. This reaction serves as the major source of one-carbon groups required for the biosynthesis of purines, thymidylate, methionine, and other important biomolecules. Also exhibits THF-independent aldolase activity toward beta-hydroxyamino acids, producing glycine and aldehydes, via a retro-aldol mechanism. This chain is Serine hydroxymethyltransferase, found in Helicobacter acinonychis (strain Sheeba).